Consider the following 496-residue polypeptide: Angiopoietin-2 (496 aa).

The first 18 residues, 1–18 (MWQIVFFTLSCDLVLAAA), serve as a signal peptide directing secretion. N-linked (GlcNAc...) asparagine glycosylation is found at Asn89, Asn119, Asn133, Asn151, Asn240, and Asn304. Residues 166–248 (STNKLEKQIL…VNNSVLQKQQ (83 aa)) are a coiled coil. The region spanning 275–495 (KEEQISFRDC…ATTMMIRPAD (221 aa)) is the Fibrinogen C-terminal domain. Cys284 and Cys313 form a disulfide bridge. Ca(2+) is bound by residues Asp429, Asp431, Cys433, and Cys435. 2 cysteine pairs are disulfide-bonded: Cys433–Cys435 and Cys437–Cys450.

Interacts with TEK/TIE2, competing for the same binding site as ANGPT1. Interacts with ITGA5. Interacts with SVEP1/polydom. Interacts with THBD; this interaction significantly inhibits the generation of activated PC and TAFIa/CPB2 by the thrombin/thrombomodulin complex.

Its subcellular location is the secreted. In terms of biological role, binds to TEK/TIE2, competing for the ANGPT1 binding site, and modulating ANGPT1 signaling. Can induce tyrosine phosphorylation of TEK/TIE2 in the absence of ANGPT1. In the absence of angiogenic inducers, such as VEGF, ANGPT2-mediated loosening of cell-matrix contacts may induce endothelial cell apoptosis with consequent vascular regression. In concert with VEGF, it may facilitate endothelial cell migration and proliferation, thus serving as a permissive angiogenic signal. Involved in the regulation of lymphangiogenesis. The chain is Angiopoietin-2 (ANGPT2) from Homo sapiens (Human).